The chain runs to 278 residues: UPF0761 membrane protein CBU_1578 (278 aa).

Helical transmembrane passes span 38–58 (LLAL…VPAF), 68–88 (LIWE…LSQL), 92–112 (VTGL…LLMY), 134–154 (FLIY…VMLL), 177–197 (LLFV…NWVL), 207–227 (AVIG…AFTV), and 244–264 (VIPI…LGAV).

The protein belongs to the UPF0761 family.

The protein localises to the cell inner membrane. This chain is UPF0761 membrane protein CBU_1578, found in Coxiella burnetii (strain RSA 493 / Nine Mile phase I).